The primary structure comprises 466 residues: Ribulose bisphosphate carboxylase large chain (466 aa).

Lys-5 carries the post-translational modification N6,N6,N6-trimethyllysine. Asn-114 and Thr-164 together coordinate substrate. Residue Lys-166 is the Proton acceptor of the active site. Lys-168 is a substrate binding site. Residues Lys-192, Asp-194, and Glu-195 each contribute to the Mg(2+) site. At Lys-192 the chain carries N6-carboxylysine. The active-site Proton acceptor is His-285. Residues Arg-286, His-318, and Ser-370 each coordinate substrate.

Belongs to the RuBisCO large chain family. Type I subfamily. Heterohexadecamer of 8 large chains and 8 small chains; disulfide-linked. The disulfide link is formed within the large subunit homodimers. It depends on Mg(2+) as a cofactor. The disulfide bond which can form in the large chain dimeric partners within the hexadecamer appears to be associated with oxidative stress and protein turnover.

It localises to the plastid. The protein resides in the chloroplast. It carries out the reaction 2 (2R)-3-phosphoglycerate + 2 H(+) = D-ribulose 1,5-bisphosphate + CO2 + H2O. The enzyme catalyses D-ribulose 1,5-bisphosphate + O2 = 2-phosphoglycolate + (2R)-3-phosphoglycerate + 2 H(+). Functionally, ruBisCO catalyzes two reactions: the carboxylation of D-ribulose 1,5-bisphosphate, the primary event in carbon dioxide fixation, as well as the oxidative fragmentation of the pentose substrate in the photorespiration process. Both reactions occur simultaneously and in competition at the same active site. This is Ribulose bisphosphate carboxylase large chain from Isophysis tasmanica.